Reading from the N-terminus, the 498-residue chain is Glycerol kinase (498 aa).

T11 lines the ADP pocket. ATP contacts are provided by T11, S12, and S13. T11 contacts sn-glycerol 3-phosphate. R15 is an ADP binding site. The sn-glycerol 3-phosphate site is built by R81, E82, Y133, and D242. Glycerol contacts are provided by R81, E82, Y133, D242, and Q243. T264 and G307 together coordinate ADP. 4 residues coordinate ATP: T264, G307, Q311, and G412. Positions 412 and 416 each coordinate ADP.

Belongs to the FGGY kinase family.

The catalysed reaction is glycerol + ATP = sn-glycerol 3-phosphate + ADP + H(+). It participates in polyol metabolism; glycerol degradation via glycerol kinase pathway; sn-glycerol 3-phosphate from glycerol: step 1/1. With respect to regulation, inhibited by fructose 1,6-bisphosphate (FBP). In terms of biological role, key enzyme in the regulation of glycerol uptake and metabolism. Catalyzes the phosphorylation of glycerol to yield sn-glycerol 3-phosphate. The sequence is that of Glycerol kinase from Acidovorax sp. (strain JS42).